We begin with the raw amino-acid sequence, 157 residues long: UPF0756 membrane protein ABC2716 (157 aa).

4 helical membrane passes run 8 to 28 (FLLLLMAIALIAKNQSLIIAI), 54 to 74 (LGVTIITIAVLVPIATGDIGF), 84 to 104 (LYAWVALGSGIAVALVAASGI), and 117 to 137 (LVLGTIVAVSFLNGVAVGPLI).

This sequence belongs to the UPF0756 family.

It localises to the cell membrane. The sequence is that of UPF0756 membrane protein ABC2716 from Shouchella clausii (strain KSM-K16) (Alkalihalobacillus clausii).